The primary structure comprises 538 residues: Chaperonin GroEL (538 aa).

ATP contacts are provided by residues 29-32 (TLGP), 86-90 (DGTTT), glycine 413, 477-479 (NAA), and aspartate 493.

The protein belongs to the chaperonin (HSP60) family. In terms of assembly, forms a cylinder of 14 subunits composed of two heptameric rings stacked back-to-back. Interacts with the co-chaperonin GroES.

The protein localises to the cytoplasm. The catalysed reaction is ATP + H2O + a folded polypeptide = ADP + phosphate + an unfolded polypeptide.. Together with its co-chaperonin GroES, plays an essential role in assisting protein folding. The GroEL-GroES system forms a nano-cage that allows encapsulation of the non-native substrate proteins and provides a physical environment optimized to promote and accelerate protein folding. This is Chaperonin GroEL from Scardovia inopinata (Bifidobacterium inopinatum).